Here is a 734-residue protein sequence, read N- to C-terminus: Photosystem I P700 chlorophyll a apoprotein A2 (734 aa).

Transmembrane regions (helical) follow at residues 46-69 (IFAS…FHVA), 135-158 (LYQG…LHLQ), 175-199 (LNHH…HVAI), 273-291 (IAHH…GHQY), 330-353 (LHFQ…QHMY), 369-395 (AALY…IFFI), 417-439 (AIIS…LYVH), and 517-535 (FLVH…LILV). [4Fe-4S] cluster contacts are provided by Cys-559 and Cys-568. The next 2 membrane-spanning stretches (helical) occupy residues 575-596 (AFYL…YWHW) and 643-665 (LSVW…MFLI). Residues His-654, Met-662, and Tyr-670 each coordinate chlorophyll a. A phylloquinone-binding site is contributed by Trp-671. A helical membrane pass occupies residues 707–727 (LVGLAHFSVGYIFTYAAFLIA).

Belongs to the PsaA/PsaB family. The PsaA/B heterodimer binds the P700 chlorophyll special pair and subsequent electron acceptors. PSI consists of a core antenna complex that captures photons, and an electron transfer chain that converts photonic excitation into a charge separation. The eukaryotic PSI reaction center is composed of at least 11 subunits. It depends on P700 is a chlorophyll a/chlorophyll a' dimer, A0 is one or more chlorophyll a, A1 is one or both phylloquinones and FX is a shared 4Fe-4S iron-sulfur center. as a cofactor.

Its subcellular location is the plastid. It localises to the chloroplast thylakoid membrane. The catalysed reaction is reduced [plastocyanin] + hnu + oxidized [2Fe-2S]-[ferredoxin] = oxidized [plastocyanin] + reduced [2Fe-2S]-[ferredoxin]. Functionally, psaA and PsaB bind P700, the primary electron donor of photosystem I (PSI), as well as the electron acceptors A0, A1 and FX. PSI is a plastocyanin-ferredoxin oxidoreductase, converting photonic excitation into a charge separation, which transfers an electron from the donor P700 chlorophyll pair to the spectroscopically characterized acceptors A0, A1, FX, FA and FB in turn. Oxidized P700 is reduced on the lumenal side of the thylakoid membrane by plastocyanin. The protein is Photosystem I P700 chlorophyll a apoprotein A2 of Chaetosphaeridium globosum (Charophycean green alga).